The sequence spans 282 residues: tRNA uridine(34) hydroxylase (282 aa).

Residues aspartate 128–tyrosine 222 form the Rhodanese domain. Cysteine 182 (cysteine persulfide intermediate) is an active-site residue.

It belongs to the TrhO family.

It catalyses the reaction uridine(34) in tRNA + AH2 + O2 = 5-hydroxyuridine(34) in tRNA + A + H2O. Catalyzes oxygen-dependent 5-hydroxyuridine (ho5U) modification at position 34 in tRNAs. This Cupriavidus metallidurans (strain ATCC 43123 / DSM 2839 / NBRC 102507 / CH34) (Ralstonia metallidurans) protein is tRNA uridine(34) hydroxylase.